Here is a 156-residue protein sequence, read N- to C-terminus: Small ribosomal subunit protein uS7 (156 aa).

The protein belongs to the universal ribosomal protein uS7 family. As to quaternary structure, part of the 30S ribosomal subunit. Contacts proteins S9 and S11.

In terms of biological role, one of the primary rRNA binding proteins, it binds directly to 16S rRNA where it nucleates assembly of the head domain of the 30S subunit. Is located at the subunit interface close to the decoding center, probably blocks exit of the E-site tRNA. The protein is Small ribosomal subunit protein uS7 of Synechococcus elongatus (strain ATCC 33912 / PCC 7942 / FACHB-805) (Anacystis nidulans R2).